Here is a 322-residue protein sequence, read N- to C-terminus: Putative ankyrin repeat protein L897 (322 aa).

3 ANK repeats span residues 88–117 (DNEYYTYFALSIGAMDVFKWLISHGFSYDM), 181–210 (NIIDVIEYAVQINNCDIIKILVKKFIFWAN), and 248–277 (NKNEALKYAIMMKNYDMIELLINYNIQTDH).

This chain is Putative ankyrin repeat protein L897, found in Acanthamoeba polyphaga (Amoeba).